Here is a 365-residue protein sequence, read N- to C-terminus: UDP-N-acetylglucosamine--N-acetylmuramyl-(pentapeptide) pyrophosphoryl-undecaprenol N-acetylglucosamine transferase (365 aa).

Residues 19–21, asparagine 131, arginine 170, serine 201, isoleucine 255, 274–279, and glutamine 300 each bind UDP-N-acetyl-alpha-D-glucosamine; these read TGG and ALTVTE.

Belongs to the glycosyltransferase 28 family. MurG subfamily.

It localises to the cell inner membrane. It catalyses the reaction di-trans,octa-cis-undecaprenyl diphospho-N-acetyl-alpha-D-muramoyl-L-alanyl-D-glutamyl-meso-2,6-diaminopimeloyl-D-alanyl-D-alanine + UDP-N-acetyl-alpha-D-glucosamine = di-trans,octa-cis-undecaprenyl diphospho-[N-acetyl-alpha-D-glucosaminyl-(1-&gt;4)]-N-acetyl-alpha-D-muramoyl-L-alanyl-D-glutamyl-meso-2,6-diaminopimeloyl-D-alanyl-D-alanine + UDP + H(+). Its pathway is cell wall biogenesis; peptidoglycan biosynthesis. In terms of biological role, cell wall formation. Catalyzes the transfer of a GlcNAc subunit on undecaprenyl-pyrophosphoryl-MurNAc-pentapeptide (lipid intermediate I) to form undecaprenyl-pyrophosphoryl-MurNAc-(pentapeptide)GlcNAc (lipid intermediate II). The polypeptide is UDP-N-acetylglucosamine--N-acetylmuramyl-(pentapeptide) pyrophosphoryl-undecaprenol N-acetylglucosamine transferase (Acinetobacter baumannii (strain SDF)).